Consider the following 216-residue polypeptide: Translation initiation factor 6 (216 aa).

It belongs to the eIF-6 family.

Binds to the 50S ribosomal subunit and prevents its association with the 30S ribosomal subunit to form the 70S initiation complex. This is Translation initiation factor 6 from Thermoplasma acidophilum (strain ATCC 25905 / DSM 1728 / JCM 9062 / NBRC 15155 / AMRC-C165).